Here is a 317-residue protein sequence, read N- to C-terminus: MANNMTDTMTKPDINNDSTSLQQNGNKAGQSWFERPIPGIKQQLTAQLTAVETEPSTKCSSCHSIITNTALIFNCYVCPHCDHHLPMSARERLNWLLDQVEGELGQEFTAKDPLKFVDSKPYPSRMAEAQEKTKESEALIVLYGKLRNLDIVTCAFDFRFMGGSMGSVVGDRFVQAAEKALADRVPLVCFAASGGARMQEGLLSLMQMARTAAAIERLRIAGVPYIVVLTNPVYGGVTASLAMLGDIHLAEPKAMIGFAGKRVIEQTVRETLEEPFQRAEFLLEHGVVDEVVHRHQMIDTIYRLLAKLCSVPNVDVQ.

Positions Met-1 to Ala-28 are disordered. Residues Pro-55–Gln-317 enclose the CoA carboxyltransferase N-terminal domain. Residues Cys-59, Cys-62, Cys-78, and Cys-81 each contribute to the Zn(2+) site. Residues Cys-59 to Cys-81 form a C4-type zinc finger.

The protein belongs to the AccD/PCCB family. As to quaternary structure, acetyl-CoA carboxylase is a heterohexamer composed of biotin carboxyl carrier protein (AccB), biotin carboxylase (AccC) and two subunits each of ACCase subunit alpha (AccA) and ACCase subunit beta (AccD). Zn(2+) is required as a cofactor.

The protein localises to the cytoplasm. The enzyme catalyses N(6)-carboxybiotinyl-L-lysyl-[protein] + acetyl-CoA = N(6)-biotinyl-L-lysyl-[protein] + malonyl-CoA. It functions in the pathway lipid metabolism; malonyl-CoA biosynthesis; malonyl-CoA from acetyl-CoA: step 1/1. Component of the acetyl coenzyme A carboxylase (ACC) complex. Biotin carboxylase (BC) catalyzes the carboxylation of biotin on its carrier protein (BCCP) and then the CO(2) group is transferred by the transcarboxylase to acetyl-CoA to form malonyl-CoA. In Psychrobacter cryohalolentis (strain ATCC BAA-1226 / DSM 17306 / VKM B-2378 / K5), this protein is Acetyl-coenzyme A carboxylase carboxyl transferase subunit beta.